We begin with the raw amino-acid sequence, 308 residues long: HTH-type transcriptional regulator YtlI (308 aa).

Residues 1 to 57 (MELRSIKTFHTIVKFGSFYKAAEILNYSQPTISMRMKQLEQDLGVLLFERGKSLQLT) form the HTH lysR-type domain. The segment at residues 18 to 37 (FYKAAEILNYSQPTISMRMK) is a DNA-binding region (H-T-H motif).

This sequence belongs to the LysR transcriptional regulatory family.

Its function is as follows. Positively regulates the expression of ytmI operon in response to the availability of sulfur sources. The polypeptide is HTH-type transcriptional regulator YtlI (ytlI) (Bacillus subtilis (strain 168)).